The sequence spans 485 residues: Noelin (485 aa).

Residues 1–16 (MSVPLLKIGVVLSTMA) form the signal peptide. N-linked (GlcNAc...) asparagine glycans are attached at residues asparagine 33, asparagine 103, asparagine 187, asparagine 288, asparagine 307, asparagine 394, asparagine 431, and asparagine 473. Residues 87–225 (RDARTKQLRQ…ERLRACMQKL (139 aa)) are a coiled coil. The region spanning 226–478 (ACGKLTGISD…QILYNVTLFH (253 aa)) is the Olfactomedin-like domain. Cysteine 227 and cysteine 409 are oxidised to a cystine.

In terms of assembly, homotetramer; disulfide-linked. Dimer of dimers, giving rise to a V-shaped homotretramer. Isoform 1 and isoform 3 interact with RTN4R. Identified in a complex with RTN4R and LINGO1. Peripherally associated with AMPAR complex. AMPAR complex consists of an inner core made of 4 pore-forming GluA/GRIA proteins (GRIA1, GRIA2, GRIA3 and GRIA4) and 4 major auxiliary subunits arranged in a twofold symmetry. One of the two pairs of distinct binding sites is occupied either by CNIH2, CNIH3 or CACNG2, CACNG3. The other harbors CACNG2, CACNG3, CACNG4, CACNG8 or GSG1L. This inner core of AMPAR complex is complemented by outer core constituents binding directly to the GluA/GRIA proteins at sites distinct from the interaction sites of the inner core constituents. Outer core constituents include at least PRRT1, PRRT2, CKAMP44/SHISA9, FRRS1L and NRN1. The proteins of the inner and outer core serve as a platform for other, more peripherally associated AMPAR constituents, including OLFM1. Alone or in combination, these auxiliary subunits control the gating and pharmacology of the AMPAR complex and profoundly impact their biogenesis and protein processing. Interacts with OLFM2.

Its subcellular location is the secreted. The protein localises to the synapse. The protein resides in the endoplasmic reticulum. It localises to the cell projection. It is found in the axon. Its subcellular location is the perikaryon. Contributes to the regulation of axonal growth in the embryonic and adult central nervous system by inhibiting interactions between RTN4R and LINGO1. Inhibits RTN4R-mediated axon growth cone collapse. May play an important role in regulating the production of neural crest cells by the neural tube. May be required for normal responses to olfactory stimuli. This is Noelin (OLFM1) from Homo sapiens (Human).